The primary structure comprises 410 residues: Arginine deiminase (410 aa).

C399 (amidino-cysteine intermediate) is an active-site residue.

This sequence belongs to the arginine deiminase family.

Its subcellular location is the cytoplasm. It catalyses the reaction L-arginine + H2O = L-citrulline + NH4(+). It participates in amino-acid degradation; L-arginine degradation via ADI pathway; carbamoyl phosphate from L-arginine: step 1/2. The chain is Arginine deiminase from Treponema denticola (strain ATCC 35405 / DSM 14222 / CIP 103919 / JCM 8153 / KCTC 15104).